The chain runs to 194 residues: Holliday junction branch migration complex subunit RuvA (194 aa).

The interval 1–63 (MFEYLYGTVE…EDTYKLIGFL (63 aa)) is domain I. A domain II region spans residues 64–142 (DERDRKIFEL…NLTYTEEETV (79 aa)). Residues 143–147 (SMDML) form a flexible linker region. The segment at 147–194 (LEDLVLALEGLGYNKKEIDKTLEKIDLNKFSSLEDAIKGILKNMRIGD) is domain III.

The protein belongs to the RuvA family. In terms of assembly, homotetramer. Forms an RuvA(8)-RuvB(12)-Holliday junction (HJ) complex. HJ DNA is sandwiched between 2 RuvA tetramers; dsDNA enters through RuvA and exits via RuvB. An RuvB hexamer assembles on each DNA strand where it exits the tetramer. Each RuvB hexamer is contacted by two RuvA subunits (via domain III) on 2 adjacent RuvB subunits; this complex drives branch migration. In the full resolvosome a probable DNA-RuvA(4)-RuvB(12)-RuvC(2) complex forms which resolves the HJ.

It is found in the cytoplasm. In terms of biological role, the RuvA-RuvB-RuvC complex processes Holliday junction (HJ) DNA during genetic recombination and DNA repair, while the RuvA-RuvB complex plays an important role in the rescue of blocked DNA replication forks via replication fork reversal (RFR). RuvA specifically binds to HJ cruciform DNA, conferring on it an open structure. The RuvB hexamer acts as an ATP-dependent pump, pulling dsDNA into and through the RuvAB complex. HJ branch migration allows RuvC to scan DNA until it finds its consensus sequence, where it cleaves and resolves the cruciform DNA. This Fusobacterium nucleatum subsp. nucleatum (strain ATCC 25586 / DSM 15643 / BCRC 10681 / CIP 101130 / JCM 8532 / KCTC 2640 / LMG 13131 / VPI 4355) protein is Holliday junction branch migration complex subunit RuvA.